A 388-amino-acid chain; its full sequence is MSKTNPNKLYSLRKLKTGTASVAVDLTVLGTGLANTTDVKAESRRYQAPPRVLLQGKEANKVFEERKALEKQARDLGDTINHMSQTISEQSRKIAALKSEAELKNQQALEALNNKNKQISDLTNENAQLKEAIEGYVQTIQNASREIAAKQQELAAAKSQLEAKNAEIEALKQQDASKTEEIAKLQSEAATLENLLGSAKRELTELQAKLDTATAEKAKLESQVTTLENLLGSAKRELTDLQAKLDAANAEKEKLQSQAATLEKQLEATKKELADLQAKLAATNQEKEKLEAEAKALKEQLAKQAEELAKLKADKASGAQKPDTKPGNKEVPTRPSQTRTNTNKAPMAQTKRQLPSTGEETTNPFFTAAALTVIASAGVLALKRKEEN.

Residues 1 to 41 (MSKTNPNKLYSLRKLKTGTASVAVDLTVLGTGLANTTDVKA) form the signal peptide. D repeat units lie at residues 288–293 (EKLEAE), 294–299 (AKALKE), 302–307 (AKQAEE), and 309–314 (AKLKAD). A disordered region spans residues 308–362 (LAKLKADKASGAQKPDTKPGNKEVPTRPSQTRTNTNKAPMAQTKRQLPSTGEETT). The span at 322–332 (PDTKPGNKEVP) shows a compositional bias: basic and acidic residues. A compositionally biased stretch (polar residues) spans 334–362 (RPSQTRTNTNKAPMAQTKRQLPSTGEETT). An LPXTG sorting signal motif is present at residues 354 to 358 (LPSTG). At T357 the chain carries Pentaglycyl murein peptidoglycan amidated threonine. Residues 358 to 388 (GEETTNPFFTAAALTVIASAGVLALKRKEEN) constitute a propeptide, removed by sortase.

It is found in the secreted. The protein localises to the cell wall. Functionally, binds IgG molecules of the Ig1, Ig2 and Ig4 subclasses, and also binds fibrinogen. The polypeptide is Fibrinogen- and Ig-binding protein (mrp4) (Streptococcus pyogenes).